A 420-amino-acid chain; its full sequence is Gamma-glutamyl phosphate reductase (420 aa).

Belongs to the gamma-glutamyl phosphate reductase family.

It is found in the cytoplasm. The enzyme catalyses L-glutamate 5-semialdehyde + phosphate + NADP(+) = L-glutamyl 5-phosphate + NADPH + H(+). It functions in the pathway amino-acid biosynthesis; L-proline biosynthesis; L-glutamate 5-semialdehyde from L-glutamate: step 2/2. Catalyzes the NADPH-dependent reduction of L-glutamate 5-phosphate into L-glutamate 5-semialdehyde and phosphate. The product spontaneously undergoes cyclization to form 1-pyrroline-5-carboxylate. The protein is Gamma-glutamyl phosphate reductase of Streptococcus pneumoniae serotype 4 (strain ATCC BAA-334 / TIGR4).